We begin with the raw amino-acid sequence, 297 residues long: ATP synthase subunit a (297 aa).

8 consecutive transmembrane segments (helical) span residues 38–58 (PLIP…IAIL), 77–97 (GYVL…VDLL), 107–127 (LFII…VGGI), 133–153 (SSTV…IMGV), 174–194 (TIPL…LLSI), 202–222 (VLAG…FFTL), 230–250 (VGLV…HVYF), and 252–272 (ILVS…YWSQ).

The protein belongs to the ATPase A chain family. As to quaternary structure, F-type ATPases have 2 components, CF(1) - the catalytic core - and CF(0) - the membrane proton channel. CF(1) has five subunits: alpha(3), beta(3), gamma(1), delta(1), epsilon(1). CF(0) has three main subunits: a(1), b(2) and c(9-12). The alpha and beta chains form an alternating ring which encloses part of the gamma chain. CF(1) is attached to CF(0) by a central stalk formed by the gamma and epsilon chains, while a peripheral stalk is formed by the delta and b chains.

It localises to the cell membrane. In terms of biological role, key component of the proton channel; it plays a direct role in the translocation of protons across the membrane. This chain is ATP synthase subunit a, found in Mycoplasmoides gallisepticum (strain R(low / passage 15 / clone 2)) (Mycoplasma gallisepticum).